A 205-amino-acid polypeptide reads, in one-letter code: N-(5'-phosphoribosyl)anthranilate isomerase (205 aa).

Belongs to the TrpF family.

It carries out the reaction N-(5-phospho-beta-D-ribosyl)anthranilate = 1-(2-carboxyphenylamino)-1-deoxy-D-ribulose 5-phosphate. It functions in the pathway amino-acid biosynthesis; L-tryptophan biosynthesis; L-tryptophan from chorismate: step 3/5. The sequence is that of N-(5'-phosphoribosyl)anthranilate isomerase from Marinomonas sp. (strain MWYL1).